The chain runs to 637 residues: 1-deoxy-D-xylulose-5-phosphate synthase (637 aa).

Residues His72 and 113–115 (GHA) each bind thiamine diphosphate. Asp144 contributes to the Mg(2+) binding site. Thiamine diphosphate contacts are provided by residues 145–146 (GA), Asn174, Tyr287, and Glu370. Asn174 provides a ligand contact to Mg(2+).

It belongs to the transketolase family. DXPS subfamily. In terms of assembly, homodimer. The cofactor is Mg(2+). Thiamine diphosphate serves as cofactor.

It carries out the reaction D-glyceraldehyde 3-phosphate + pyruvate + H(+) = 1-deoxy-D-xylulose 5-phosphate + CO2. Its pathway is metabolic intermediate biosynthesis; 1-deoxy-D-xylulose 5-phosphate biosynthesis; 1-deoxy-D-xylulose 5-phosphate from D-glyceraldehyde 3-phosphate and pyruvate: step 1/1. Its function is as follows. Catalyzes the acyloin condensation reaction between C atoms 2 and 3 of pyruvate and glyceraldehyde 3-phosphate to yield 1-deoxy-D-xylulose-5-phosphate (DXP). This Prochlorococcus marinus subsp. pastoris (strain CCMP1986 / NIES-2087 / MED4) protein is 1-deoxy-D-xylulose-5-phosphate synthase.